The chain runs to 295 residues: Methionine aminopeptidase (295 aa).

A substrate-binding site is contributed by His63. Residues Asp83, Asp94, and His154 each contribute to the a divalent metal cation site. Position 162 (His162) interacts with substrate. Residues Glu188 and Glu281 each contribute to the a divalent metal cation site.

This sequence belongs to the peptidase M24A family. Methionine aminopeptidase archaeal type 2 subfamily. As to quaternary structure, monomer. Fe(2+) is required as a cofactor. The cofactor is Co(2+). Ni(2+) serves as cofactor. It depends on Mn(2+) as a cofactor.

The enzyme catalyses Release of N-terminal amino acids, preferentially methionine, from peptides and arylamides.. Functionally, removes the N-terminal methionine from nascent proteins. The N-terminal methionine is often cleaved when the second residue in the primary sequence is small and uncharged (Met-Ala-, Cys, Gly, Pro, Ser, Thr, or Val). This Thermococcus onnurineus (strain NA1) protein is Methionine aminopeptidase.